The following is a 377-amino-acid chain: Presenilin-associated rhomboid-like protein, mitochondrial (377 aa).

Residues 1 to 50 (MALQGWVQRGWRCGPAWAPPLGGGYRELSATQAPRLLGRRFNLFVQQKCG) constitute a mitochondrion transit peptide. Residues 51 to 99 (FRKAPRKVEPRRSDTGSSGEAYKRSALIPPLEETVFYPSPYPIRTLVKP) lie on the Mitochondrial matrix side of the membrane. A phosphoserine mark is found at serine 63 and serine 68. The chain crosses the membrane as a helical span at residues 100–119 (FFFTIGFTGCAFGSAAIWQY). Residues 120 to 165 (ESLKSRVQSYFDGIKADWLDSIRPQKEGNLRKEINKWWNSLSDGQR) lie on the Mitochondrial intermembrane side of the membrane. The chain crosses the membrane as a helical span at residues 166–185 (TVTGIIAANALVFCLWRVPS). The Mitochondrial matrix segment spans residues 186–205 (LQRTMIRYFTSNPASKVLCS). A helical transmembrane segment spans residues 206–228 (PMLLSTFSHFSLFHMAANMYVLW). The Mitochondrial intermembrane portion of the chain corresponds to 229–242 (SFSSSIVNILGQEQ). Residues 243–260 (FVAVYLSAGVISNFVSYV) traverse the membrane as a helical segment. Residues 261–270 (CKVATGRYGP) lie on the Mitochondrial matrix side of the membrane. The helical transmembrane segment at 271–287 (SLGASGAIMTVLAAVCT) threads the bilayer. Serine 275 acts as the Nucleophile in catalysis. The Mitochondrial intermembrane portion of the chain corresponds to 288–293 (KIPEGR). A helical membrane pass occupies residues 294–316 (LAIIFLPVFTFTAGNALKAIIAM). The Mitochondrial matrix portion of the chain corresponds to 317 to 330 (DTAGMILGWKFFDH). A helical membrane pass occupies residues 331-352 (AAHLGGALFGIWYITYGHELIW). Histidine 333 is a catalytic residue. Topologically, residues 353–377 (KNREPLVKIWHEIRTNGPKKGGGSK) are mitochondrial intermembrane.

It belongs to the peptidase S54 family. Interacts with PSEN1 and PSEN2. Binds OPA1. P-beta is proteolytically processed (beta-cleavage) in a PARL-dependent manner.

It localises to the mitochondrion inner membrane. The protein resides in the nucleus. The catalysed reaction is Cleaves type-1 transmembrane domains using a catalytic dyad composed of serine and histidine that are contributed by different transmembrane domains.. Functionally, required for the control of apoptosis during postnatal growth. Essential for proteolytic processing of an antiapoptotic form of OPA1 which prevents the release of mitochondrial cytochrome c in response to intrinsic apoptotic signals. Required for the maturation of PINK1 into its 52kDa mature form after its cleavage by mitochondrial-processing peptidase (MPP). Promotes cleavage of serine/threonine-protein phosphatase PGAM5 in damaged mitochondria in response to loss of mitochondrial membrane potential. Mediates differential cleavage of PINK1 and PGAM5 depending on the health status of mitochondria, disassociating from PINK1 and associating with PGAM5 in response to mitochondrial membrane potential loss. Required for processing of CLPB into a form with higher protein disaggregase activity by removing an autoinhibitory N-terminal peptide. Promotes processing of DIABLO/SMAC in the mitochondrion which is required for DIABLO apoptotic activity. Also required for cleavage of STARD7 and TTC19. Promotes changes in mitochondria morphology regulated by phosphorylation of P-beta domain. In Mus musculus (Mouse), this protein is Presenilin-associated rhomboid-like protein, mitochondrial (Parl).